We begin with the raw amino-acid sequence, 208 residues long: uncharacterized protein (208 aa).

The first 34 residues, 1-34 (MPSHCRERLPFALHFFAVAYGASLWILGSHGLAA), serve as a signal peptide directing secretion.

This is an uncharacterized protein from Sinorhizobium fredii (strain NBRC 101917 / NGR234).